A 210-amino-acid chain; its full sequence is Glutathione S-transferase P 1 (210 aa).

The GST N-terminal domain maps to 2–81 (PPYTIVYFPV…HLGRSLGLYG (80 aa)). Position 4 is a phosphotyrosine; by EGFR (Tyr4). Glutathione-binding positions include Tyr8, Arg14, Trp39, Lys45, and 52-53 (QL). Phosphothreonine is present on Thr62. Position 65–66 (65–66 (QS)) interacts with glutathione. The GST C-terminal domain occupies 83-204 (NQREAAQMDM…SSPEHVNRPI (122 aa)). N6-succinyllysine is present on residues Lys103 and Lys116. Lys128 carries the N6-acetyllysine modification.

In terms of assembly, homodimer. Interacts with CDK5. In terms of tissue distribution, ubiquitously expressed.

The protein resides in the cytoplasm. The protein localises to the mitochondrion. It localises to the nucleus. The enzyme catalyses RX + glutathione = an S-substituted glutathione + a halide anion + H(+). It catalyses the reaction prostaglandin J2 + glutathione = prostaglandin J2-S-(R)-glutathione. The catalysed reaction is prostaglandin J2 + glutathione = prostaglandin J2-S-(S)-glutathione. It carries out the reaction prostaglandin A2 + glutathione = prostaglandin A2-S-(S)-glutathione. The enzyme catalyses 11(S)-hydroxy-14(S),15(S)-epoxy-(5Z,8Z,12E)-eicosatrienoate + glutathione = (11S,15S)-dihydroxy-14(R)-S-glutathionyl-(5Z,8Z,12E)-eicosatrienoate. Functionally, conjugation of reduced glutathione to a wide number of exogenous and endogenous hydrophobic electrophiles. Involved in the formation of glutathione conjugates of both prostaglandin A2 (PGA2) and prostaglandin J2 (PGJ2). Participates in the formation of novel hepoxilin regioisomers. Negatively regulates CDK5 activity via p25/p35 translocation to prevent neurodegeneration. The polypeptide is Glutathione S-transferase P 1 (Mus musculus (Mouse)).